A 400-amino-acid chain; its full sequence is Ubiquitin-like modifier-activating enzyme 5 (400 aa).

5 residues coordinate ATP: Gly76, Asp97, Lys120, Asn143, and Asn177. Zn(2+)-binding residues include Cys219 and Cys222. The active-site Glycyl thioester intermediate is the Cys243. Residues Cys296 and Cys301 each coordinate Zn(2+).

This sequence belongs to the ubiquitin-activating E1 family. UBA5 subfamily.

Functionally, E1-like enzyme which activates UFM1. In Drosophila virilis (Fruit fly), this protein is Ubiquitin-like modifier-activating enzyme 5.